We begin with the raw amino-acid sequence, 748 residues long: Tyrosine--tRNA ligase 2, cytoplasmic (748 aa).

Methionine 1 carries the N-acetylmethionine modification. Residues proline 441–glutamine 449 carry the 'HIGH' region motif. Tyrosine 564, glutamine 568, aspartate 571, and glutamine 586 together coordinate L-tyrosine. The 'KMSKS' region signature appears at lysine 623–serine 627. Lysine 626 serves as a coordination point for ATP.

The protein belongs to the class-I aminoacyl-tRNA synthetase family.

It is found in the cytoplasm. The protein localises to the cytosol. The enzyme catalyses tRNA(Tyr) + L-tyrosine + ATP = L-tyrosyl-tRNA(Tyr) + AMP + diphosphate + H(+). Its function is as follows. Catalyzes the attachment of tyrosine to tRNA(Tyr) in a two-step reaction: tyrosine is first activated by ATP to form Tyr-AMP and then transferred to the acceptor end of tRNA(Tyr). This Arabidopsis thaliana (Mouse-ear cress) protein is Tyrosine--tRNA ligase 2, cytoplasmic.